Consider the following 402-residue polypeptide: Speedy protein E2B (402 aa).

Positions 1–89 (MDRTETRFRK…EEPEKELAPE (89 aa)) are disordered. The segment covering 16–39 (GKITTSRQPHPQNEQSPQRSTSGY) has biased composition (polar residues). The span at 76 to 89 (DESEEEPEKELAPE) shows a compositional bias: acidic residues.

The protein belongs to the Speedy/Ringo family.

The sequence is that of Speedy protein E2B (SPDYE2B) from Homo sapiens (Human).